Consider the following 258-residue polypeptide: 4-hydroxy-2-oxovalerate aldolase (258 aa).

The active-site Proton acceptor is histidine 48. Glutamine 149 provides a ligand contact to substrate. Glutamate 151 serves as a coordination point for Mg(2+). Substrate is bound by residues alanine 176 and aspartate 177. Aspartate 177 serves as a coordination point for Mg(2+).

It belongs to the HpcH/HpaI aldolase family.

It catalyses the reaction (S)-4-hydroxy-2-oxopentanoate = acetaldehyde + pyruvate. It functions in the pathway xenobiotic degradation; biphenyl degradation. Catalyzes the reversible retro-aldol cleavage of 4-hydroxy-2-oxovalerate to pyruvate and acetaldehyde. The polypeptide is 4-hydroxy-2-oxovalerate aldolase (bphF) (Rhodococcus jostii (strain RHA1)).